The sequence spans 186 residues: Ribonuclease M5 (186 aa).

Residues 4-94 (KEIIVVEGRD…AKPKNKRGIG (91 aa)) enclose the Toprim domain. Residues glutamate 10, aspartate 56, and aspartate 58 each coordinate Mg(2+).

Belongs to the ribonuclease M5 family. As to quaternary structure, requires ribosomal protein L18 (rplR) for catalysis; it can be replaced by 30% dimethylsulfoxide suggesting L18 functions as an rRNA folding chaperone. Mg(2+) serves as cofactor. Requires Mn(2+) as cofactor. It depends on Ca(2+) as a cofactor.

It is found in the cytoplasm. The catalysed reaction is Endonucleolytic cleavage of RNA, removing 21 and 42 nucleotides, respectively, from the 5'- and 3'-termini of a 5S-rRNA precursor.. In terms of biological role, required for correct processing of both the 5' and 3' ends of 5S rRNA precursor. Cleaves both sides of a double-stranded region yielding mature 5S rRNA in one step. Releases 5'-phosphoryl and 3'-hydroxy termini. The protein is Ribonuclease M5 of Bacillus subtilis (strain 168).